Consider the following 213-residue polypeptide: LexA repressor (213 aa).

The segment at residues 27–47 is a DNA-binding region (H-T-H motif); it reads QTEIARAFGFKGVRAAQYHLE. Active-site for autocatalytic cleavage activity residues include Ser-133 and Lys-170.

The protein belongs to the peptidase S24 family. In terms of assembly, homodimer.

It carries out the reaction Hydrolysis of Ala-|-Gly bond in repressor LexA.. Functionally, represses a number of genes involved in the response to DNA damage (SOS response), including recA and lexA. In the presence of single-stranded DNA, RecA interacts with LexA causing an autocatalytic cleavage which disrupts the DNA-binding part of LexA, leading to derepression of the SOS regulon and eventually DNA repair. This chain is LexA repressor, found in Xanthomonas campestris.